The sequence spans 408 residues: Phosphoglycerate kinase (408 aa).

Substrate is bound by residues 24-26 (DLN), arginine 39, 62-65 (HLGR), arginine 121, and arginine 161. Residues lysine 211, glycine 307, glutamate 338, and 364–367 (GGDS) each bind ATP.

Belongs to the phosphoglycerate kinase family. Monomer.

The protein localises to the cytoplasm. The catalysed reaction is (2R)-3-phosphoglycerate + ATP = (2R)-3-phospho-glyceroyl phosphate + ADP. The protein operates within carbohydrate degradation; glycolysis; pyruvate from D-glyceraldehyde 3-phosphate: step 2/5. The polypeptide is Phosphoglycerate kinase (Pseudarthrobacter chlorophenolicus (strain ATCC 700700 / DSM 12829 / CIP 107037 / JCM 12360 / KCTC 9906 / NCIMB 13794 / A6) (Arthrobacter chlorophenolicus)).